A 237-amino-acid polypeptide reads, in one-letter code: Purine nucleoside phosphorylase DeoD-type (237 aa).

H4 contacts a purine D-ribonucleoside. Residues G20, R24, R43, and 87-90 contribute to the phosphate site; that span reads RVGT. A purine D-ribonucleoside-binding positions include 179–181 and 203–204; these read EME and SD. D204 acts as the Proton donor in catalysis.

It belongs to the PNP/UDP phosphorylase family. As to quaternary structure, homohexamer; trimer of homodimers.

It catalyses the reaction a purine D-ribonucleoside + phosphate = a purine nucleobase + alpha-D-ribose 1-phosphate. The enzyme catalyses a purine 2'-deoxy-D-ribonucleoside + phosphate = a purine nucleobase + 2-deoxy-alpha-D-ribose 1-phosphate. Functionally, catalyzes the reversible phosphorolytic breakdown of the N-glycosidic bond in the beta-(deoxy)ribonucleoside molecules, with the formation of the corresponding free purine bases and pentose-1-phosphate. This is Purine nucleoside phosphorylase DeoD-type from Exiguobacterium sp. (strain ATCC BAA-1283 / AT1b).